We begin with the raw amino-acid sequence, 413 residues long: Serine/threonine transporter SstT (413 aa).

9 helical membrane-spanning segments follow: residues 15-35, 48-68, 82-102, 141-161, 178-198, 216-236, 290-310, 330-350, and 357-377; these read NIVI…TLAP, FVSA…AASI, VIVL…VMSF, ALMT…GLGL, CISA…FGLV, LLAV…PLIV, IPLG…VLTL, LVAA…LLLI, and FGIS…IGVV.

This sequence belongs to the dicarboxylate/amino acid:cation symporter (DAACS) (TC 2.A.23) family.

It localises to the cell inner membrane. It catalyses the reaction L-serine(in) + Na(+)(in) = L-serine(out) + Na(+)(out). The enzyme catalyses L-threonine(in) + Na(+)(in) = L-threonine(out) + Na(+)(out). Its function is as follows. Involved in the import of serine and threonine into the cell, with the concomitant import of sodium (symport system). This chain is Serine/threonine transporter SstT, found in Aliivibrio fischeri (strain ATCC 700601 / ES114) (Vibrio fischeri).